A 115-amino-acid chain; its full sequence is U3-lycotoxin-Ls1p (115 aa).

Positions 1-20 (MKFVLLFGVLLVTLFSYSSA) are cleaved as a signal peptide. The propeptide occupies 21-44 (EMFDDFDQADEDELLSLIEKEEAR). 4 cysteine pairs are disulfide-bonded: Cys-48-Cys-63, Cys-55-Cys-72, Cys-62-Cys-87, and Cys-74-Cys-85.

This sequence belongs to the neurotoxin 19 (CSTX) family. 01 subfamily. As to expression, expressed by the venom gland.

The protein localises to the secreted. The polypeptide is U3-lycotoxin-Ls1p (Lycosa singoriensis (Wolf spider)).